A 733-amino-acid polypeptide reads, in one-letter code: Hypermethylated in cancer 1 protein (733 aa).

The 64-residue stretch at 47 to 110 folds into the BTB domain; sequence CDVIIVVQNA…IYTGRLADGA (64 aa). The interval 154–315 is mediates HDAC-dependent transcriptional repression; sequence KYCHLRGGGG…PFRGGSGSPG (162 aa). Arg159 carries the post-translational modification Omega-N-methylarginine. The disordered stretch occupies residues 189 to 209; that stretch reads YPSPVGPPPPPAAEPPSGPEA. Pro residues predominate over residues 192 to 206; it reads PVGPPPPPAAEPPSG. Phosphoserine is present on Ser237. The interval 241–247 is interaction with CTBP1; that stretch reads GLDLSKK. Residues 241 to 421 form a disordered region; the sequence is GLDLSKKSPP…PGGHLEGYPC (181 aa). Ser248 carries the post-translational modification Phosphoserine. A compositionally biased stretch (pro residues) spans 284–293; sequence LALPSLPPLP. Lys333 is subject to N6-acetyllysine; alternate. A Glycyl lysine isopeptide (Lys-Gly) (interchain with G-Cter in SUMO); alternate cross-link involves residue Lys333. Over residues 344-361 the composition is skewed to basic and acidic residues; the sequence is ELGRERGSPSERCEERGG. Residue Ser366 is modified to Phosphoserine. Residues 368–380 are compositionally biased toward pro residues; it reads GGPPLGLAPPPRY. C2H2-type zinc fingers lie at residues 439 to 459, 509 to 529, 537 to 557, 565 to 585, and 593 to 613; these read CIPC…VEAH, CASC…EKTH, CTIC…MRSH, CDAC…MRIH, and CQVC…MKMH. Ser704 is modified (phosphoserine).

This sequence belongs to the krueppel C2H2-type zinc-finger protein family. Hic subfamily. As to quaternary structure, self-associates. Interacts with HIC2. Interacts with CTBP1 and CTBP2. Interacts with TCF7L2 and ARID1A. Interacts with MTA1 and MBD3; indicative for an association with the NuRD complex. Interacts with SIRT1. Acetylated on several residues, including Lys-333. Lys-333 is deacetylated by SIRT1. Post-translationally, sumoylated on Lys-333 by a PIAS family member, which enhances interaction with MTA1, positively regulates transcriptional repression activity and is enhanced by HDAC4. As to expression, ubiquitously expressed with highest levels found in lung, colon, prostate, thymus, testis and ovary. Expression is absent or decreased in many tumor cells.

It localises to the nucleus. Functionally, transcriptional repressor. Recognizes and binds to the consensus sequence '5-[CG]NG[CG]GGGCA[CA]CC-3'. May act as a tumor suppressor. Involved in development of head, face, limbs and ventral body wall. Involved in down-regulation of SIRT1 and thereby is involved in regulation of p53/TP53-dependent apoptotic DNA-damage responses. The specific target gene promoter association seems to be depend on corepressors, such as CTBP1 or CTBP2 and MTA1. In cooperation with MTA1 (indicative for an association with the NuRD complex) represses transcription from CCND1/cyclin-D1 and CDKN1C/p57Kip2 specifically in quiescent cells. Involved in regulation of the Wnt signaling pathway probably by association with TCF7L2 and preventing TCF7L2 and CTNNB1 association with promoters of TCF-responsive genes. Seems to repress transcription from E2F1 and ATOH1 which involves ARID1A, indicative for the participation of a distinct SWI/SNF-type chromatin-remodeling complex. Probably represses transcription of ACKR3, FGFBP1 and EFNA1. The polypeptide is Hypermethylated in cancer 1 protein (HIC1) (Homo sapiens (Human)).